We begin with the raw amino-acid sequence, 235 residues long: Protein MAINTENANCE OF PSII UNDER HIGH LIGHT 1 (235 aa).

The helical transmembrane segment at 127-147 (TAAIVAGIALIAVAAASSILL) threads the bilayer. The interval 181 to 235 (QPSTPSVTEAPPVAELETSLPETPSVAQQETSLPETMASEAQPEASSVPTTSSTS) is disordered. Composition is skewed to polar residues over residues 200 to 214 (LPET…TSLP) and 224 to 235 (EASSVPTTSSTS).

Interacts with psbA, psbB, psbC and psbD.

Its subcellular location is the plastid. It localises to the chloroplast thylakoid membrane. Functionally, interacts with photosystem II (PSII) core complexes and participates in the maintenance of normal PSII activity under photoinhibitory stress. May protect against photodamage or stabilize PSII under high-light stress. Participates in the maintainance of proper PSII function under high-light stress by protecting PSII from photooxidative damage. The polypeptide is Protein MAINTENANCE OF PSII UNDER HIGH LIGHT 1 (Arabidopsis thaliana (Mouse-ear cress)).